We begin with the raw amino-acid sequence, 260 residues long: uncharacterized protein (260 aa).

The N-terminal stretch at 1–22 (MKSIKRIGLCISLLILIIFATS) is a signal peptide. C23 carries the N-palmitoyl cysteine lipid modification. C23 carries S-diacylglycerol cysteine lipidation.

The protein belongs to the staphylococcal tandem lipoprotein family.

It localises to the cell membrane. This is an uncharacterized protein from Staphylococcus aureus (strain N315).